The following is a 142-amino-acid chain: VapC ribonuclease R02377 (142 aa).

In terms of domain architecture, PINc spans 3–140 (FVDGSVIVAI…YKGNDFSQTD (138 aa)). 2 residues coordinate Mg(2+): D5 and D115.

Belongs to the PINc/VapC protein family. Requires Mg(2+) as cofactor.

Toxic component of a type II toxin-antitoxin (TA) system. An RNase. This Rhizobium meliloti (strain 1021) (Ensifer meliloti) protein is VapC ribonuclease R02377.